Here is a 937-residue protein sequence, read N- to C-terminus: ABC transporter A family member 4 (937 aa).

7 helical membrane passes run 34–54 (LIVI…LFDT), 340–360 (IASV…FPVI), 394–414 (FLAI…AIGL), 423–443 (SIQF…AFLV), 455–475 (VAAY…FQFM), 478–498 (GLSF…FSLY), and 528–548 (AMDE…IAAY). The ABC transporter domain maps to 618–852 (DKLKKVYPGR…YGGSYVLTMT (235 aa)). 653–660 (GPNGAGKT) lines the ATP pocket.

It belongs to the ABC transporter superfamily. ABCA family. CPR flippase (TC 3.A.1.211) subfamily.

The protein localises to the membrane. The polypeptide is ABC transporter A family member 4 (ABCA4) (Arabidopsis thaliana (Mouse-ear cress)).